We begin with the raw amino-acid sequence, 211 residues long: Large ribosomal subunit protein bL17c (211 aa).

The transit peptide at Met1–Ala95 directs the protein to the chloroplast.

It belongs to the bacterial ribosomal protein bL17 family. In terms of assembly, part of the 50S ribosomal subunit.

The protein resides in the plastid. It localises to the chloroplast. This protein binds directly to 23S ribosomal RNA. In Arabidopsis thaliana (Mouse-ear cress), this protein is Large ribosomal subunit protein bL17c (RPL17).